A 149-amino-acid polypeptide reads, in one-letter code: Protein-export protein SecB (149 aa).

It belongs to the SecB family. In terms of assembly, homotetramer, a dimer of dimers. One homotetramer interacts with 1 SecA dimer.

Its subcellular location is the cytoplasm. Functionally, one of the proteins required for the normal export of preproteins out of the cell cytoplasm. It is a molecular chaperone that binds to a subset of precursor proteins, maintaining them in a translocation-competent state. It also specifically binds to its receptor SecA. The chain is Protein-export protein SecB from Hydrogenovibrio crunogenus (strain DSM 25203 / XCL-2) (Thiomicrospira crunogena).